A 968-amino-acid chain; its full sequence is Breast cancer anti-estrogen resistance protein 1 (968 aa).

M1 bears the N-acetylmethionine mark. In terms of domain architecture, SH3 spans 97–159 (DKNVLAKALY…PGNRLKILVG (63 aa)). The interval 164-277 (KPAAPGPGPP…GPGSPAQDIY (114 aa)) is disordered. Pro residues predominate over residues 167 to 182 (APGPGPPATPPQPQPS). The substrate for kinases stretch occupies residues 213-514 (YLVPTPSKTQ…DGVYAVPPPA (302 aa)). Y226 carries the post-translational modification Phosphotyrosine; by SRC. The segment covering 233–249 (PQFQSPPAKQTSTFSKQ) has biased composition (polar residues). S237 is subject to Phosphoserine. Y332 carries the phosphotyrosine modification. Y347 is modified (phosphotyrosine; by ABL1). T367 carries the post-translational modification Phosphothreonine. S390 is subject to Phosphoserine. Residues 393–416 (KGLPPSNHHSVYDVPPSVSKDVPD) form a disordered region. A phosphotyrosine mark is found at Y460, Y470, and Y508. 2 disordered regions span residues 503 to 544 (IDDG…SLEV) and 705 to 756 (RTKA…NSEG). Positions 514 to 524 (AEREAPTDGKR) are enriched in basic and acidic residues. Residues 525 to 542 (LSASSTGSTRSSQSASSL) show a composition bias toward low complexity. A phosphoserine mark is found at S526, S535, and S737. Residues 715–753 (GSSSLHLNPTDKASSIQSRPLPSPPKFTSQDSPDGQYEN) show a composition bias toward polar residues. The SH3-binding signature appears at 733-741 (RPLPSPPKF). A divergent helix-loop-helix motif region spans residues 844–894 (FYLEQCEANLTTLTDAVDAFFTAVATNQPPKIFVAHSKFVILSAHKLVFIG).

It belongs to the CAS family. In terms of assembly, forms complexes in vivo with PTK2/FAK1, adapter protein CRKL and LYN kinase. Can heterodimerize with NEDD9. Component of a complex comprised of SH2D3C, BCAR1/CAS, and CRK. Within the complex, interacts with SH2D3C (via C-terminus), and CRK. Part of a complex comprised of PTPRA, BCAR1, BCAR3 (via SH2 domain) and SRC; the formation of the complex is dependent on integrin mediated-tyrosine phosphorylation of PTPRA. Interacts with BCAR3 (via Ras-GEF domain); the interaction regulates adhesion-dependent serine phosphorylation. Interacts with SMAD2 and SMAD3. Interacts with NPHP1. Interacts with PTK2B/PYK2. Interacts (via C-terminus) with SH2D3C/CHAT isoform 2 (via C-terminus). Interacts with activated CSPG4. Interacts with BMX, INPPL1/SHIP2 and PEAK1. Part of a collagen stimulated complex involved in cell migration composed of CDC42, CRK, TNK2 and BCAR1/p130cas. Interacts with TNK2 via SH3 domains. Interacts with PTK2B/PYK2. Interacts (when tyrosine-phosphorylated) with tensin TNS1; the interaction is increased by phosphorylation of TNS1. In terms of processing, PTK2/FAK1 activation mediates phosphorylation at the YDYVHL motif; phosphorylation is most likely catalyzed by SRC family members. SRC-family kinases are recruited to the phosphorylated sites and can phosphorylate other tyrosine residues. Tyrosine phosphorylation is triggered by integrin mediated adhesion of cells to the extracellular matrix. Post-translationally, phosphorylated by SRC kinase in a EDN1- and PTK2B-mediated manner; phosphorylation strengthens its interaction with BCAR3 as part of the PTK2B/BCAR1/BCAR3/RAP1 signaling pathway. Dephosphorylated by PTPN14 at Tyr-226. As to expression, widely expressed. Higher expression in lung, intestine and testis.

The protein resides in the cell junction. It localises to the focal adhesion. Its subcellular location is the cytoplasm. It is found in the cell projection. The protein localises to the axon. Functionally, docking protein which plays a central coordinating role for tyrosine-kinase-based signaling related to cell adhesion. Implicated in induction of cell migration and cell branching. Involved in the BCAR3-mediated inhibition of TGFB signaling. The protein is Breast cancer anti-estrogen resistance protein 1 (Bcar1) of Rattus norvegicus (Rat).